We begin with the raw amino-acid sequence, 258 residues long: tRNA pseudouridine synthase A (258 aa).

Aspartate 54 (nucleophile) is an active-site residue. Residue tyrosine 112 coordinates substrate.

This sequence belongs to the tRNA pseudouridine synthase TruA family. Homodimer.

The catalysed reaction is uridine(38/39/40) in tRNA = pseudouridine(38/39/40) in tRNA. Formation of pseudouridine at positions 38, 39 and 40 in the anticodon stem and loop of transfer RNAs. The polypeptide is tRNA pseudouridine synthase A (Geobacillus kaustophilus (strain HTA426)).